Consider the following 91-residue polypeptide: UPF0250 protein NGO_0791 (91 aa).

Belongs to the UPF0250 family.

The protein is UPF0250 protein NGO_0791 of Neisseria gonorrhoeae (strain ATCC 700825 / FA 1090).